The primary structure comprises 169 residues: MAYATILMIFSVVALMSGERAHAAVDCSSLILNMADCLSFVTSGSTVVKPEGTCCSGLKTVVRTGPECLCEAFKNSGSLGLTLDLSKAASLPSVCKVAAPPSARCGLSVSGDPPATAPGLSPTAGAGAPALSSGANAATPVSSPRSSDASLLSVSFAFVIFMALISSFY.

The signal sequence occupies residues 1–23 (MAYATILMIFSVVALMSGERAHA). 4 disulfide bridges follow: Cys27–Cys70, Cys37–Cys54, Cys55–Cys95, and Cys68–Cys105. A lipid anchor (GPI-anchor amidated serine) is attached at Ser146. The propeptide at 147 to 169 (SDASLLSVSFAFVIFMALISSFY) is removed in mature form.

It belongs to the plant LTP family. In terms of tissue distribution, expressed in a vascular-specific manner, mainly in roots, and, to a lower extent, in hypocotyls, seedlings stems and flowers.

The protein localises to the cell membrane. It is found in the secreted. Functionally, probable lipid transfer protein. Proteoglycan-like factor that exhibits xylogen activity consisting in mediating local and inductive cell-cell interactions required for xylem differentiation. This chain is Non-specific lipid transfer protein GPI-anchored 11, found in Arabidopsis thaliana (Mouse-ear cress).